Consider the following 214-residue polypeptide: Redox-sensing transcriptional repressor Rex (214 aa).

The segment at residues 17 to 56 (LYYRIFKRFHADQVEKASSKQIADAMGIDSATVRRDFSYF) is a DNA-binding region (H-T-H motif). 91-96 (GCGNIG) is an NAD(+) binding site.

This sequence belongs to the transcriptional regulatory Rex family. As to quaternary structure, homodimer.

The protein resides in the cytoplasm. Modulates transcription in response to changes in cellular NADH/NAD(+) redox state. The sequence is that of Redox-sensing transcriptional repressor Rex from Streptococcus pyogenes serotype M4 (strain MGAS10750).